A 218-amino-acid chain; its full sequence is Uracil-DNA glycosylase (218 aa).

Residue D59 is the Proton acceptor of the active site.

Belongs to the uracil-DNA glycosylase (UDG) superfamily. UNG family.

Its subcellular location is the cytoplasm. It carries out the reaction Hydrolyzes single-stranded DNA or mismatched double-stranded DNA and polynucleotides, releasing free uracil.. Functionally, excises uracil residues from the DNA which can arise as a result of misincorporation of dUMP residues by DNA polymerase or due to deamination of cytosine. This is Uracil-DNA glycosylase from Staphylococcus saprophyticus subsp. saprophyticus (strain ATCC 15305 / DSM 20229 / NCIMB 8711 / NCTC 7292 / S-41).